The sequence spans 101 residues: MHLSTSAAAILALSLAGPTMAGRPYFCPLALDAKFLQVPYCCEGFVPARDSKVSFEGVNCIDVSSDEDFVKTCPKGGTPKCCYSIGPKVICTTEVGDGVDK.

The first 21 residues, 1 to 21 (MHLSTSAAAILALSLAGPTMA), serve as a signal peptide directing secretion. Cystine bridges form between Cys-27/Cys-81, Cys-41/Cys-73, Cys-42/Cys-60, and Cys-82/Cys-91.

In terms of assembly, self-assembles to form functional amyloid fibrils called rodlets. Self-assembly into fibrillar rodlets occurs spontaneously at hydrophobic:hydrophilic interfaces and the rodlets further associate laterally to form amphipathic monolayers.

The protein resides in the secreted. It is found in the spore wall. In terms of biological role, aerial growth, conidiation, and dispersal of filamentous fungi in the environment rely upon a capability of their secreting small amphipathic proteins called hydrophobins (HPBs) with low sequence identity. Class I can self-assemble into an outermost layer of rodlet bundles on aerial cell surfaces, conferring cellular hydrophobicity that supports fungal growth, development and dispersal; whereas Class II form highly ordered films at water-air interfaces through intermolecular interactions but contribute nothing to the rodlet structure. DewD is an unclassified hydrophobin that contributes to the hydrophobicity of the spore surface. This is Unclassified hydrophobin dewD from Emericella nidulans (strain FGSC A4 / ATCC 38163 / CBS 112.46 / NRRL 194 / M139) (Aspergillus nidulans).